The following is a 397-amino-acid chain: Elongation factor Tu (397 aa).

The tr-type G domain occupies 10-206 (KPHVNIGTIG…AVDEAIPTPP (197 aa)). Residues 19–26 (GHIDHGKT) form a G1 region. 19-26 (GHIDHGKT) contacts GTP. Position 26 (Thr26) interacts with Mg(2+). Positions 62-66 (GITIS) are G2. The interval 83–86 (DCPG) is G3. GTP-binding positions include 83 to 87 (DCPGH) and 138 to 141 (NKAD). The segment at 138–141 (NKAD) is G4. Residues 176–178 (SAL) form a G5 region.

This sequence belongs to the TRAFAC class translation factor GTPase superfamily. Classic translation factor GTPase family. EF-Tu/EF-1A subfamily. Monomer.

Its subcellular location is the cytoplasm. The catalysed reaction is GTP + H2O = GDP + phosphate + H(+). In terms of biological role, GTP hydrolase that promotes the GTP-dependent binding of aminoacyl-tRNA to the A-site of ribosomes during protein biosynthesis. The protein is Elongation factor Tu of Kitasatospora aureofaciens (Streptomyces aureofaciens).